Here is a 282-residue protein sequence, read N- to C-terminus: Cell division protein DivIB (282 aa).

Topologically, residues 1 to 59 are cytoplasmic; it reads MLDDRSAIEHHKYSQRLTELERRSAAAQQRQQKKKPPKMHVGNKIRGIKIKRYVSNGER. The interval 19–41 is disordered; the sequence is ELERRSAAAQQRQQKKKPPKMHV. Positions 31–41 are enriched in basic residues; the sequence is QQKKKPPKMHV. Residues 60–80 traverse the membrane as a helical segment; sequence VLKLVVLFSAILLFMLYIISP. Topologically, residues 81–282 are extracellular; sequence LSKITTLHVT…YSYDYGSKDK (202 aa). The POTRA domain occupies 82-153; the sequence is SKITTLHVTG…QSLQISVKEN (72 aa).

Belongs to the FtsQ/DivIB family. DivIB subfamily.

It localises to the cell membrane. Functionally, cell division protein that may be involved in stabilizing or promoting the assembly of the division complex. In Limosilactobacillus reuteri (strain ATCC 55730 / SD2112) (Lactobacillus reuteri), this protein is Cell division protein DivIB.